Here is a 561-residue protein sequence, read N- to C-terminus: Corneodesmosin (561 aa).

The N-terminal stretch at 1 to 32 (MGSSRAPRMGSVGGHGLMALLMAGLILPGILA) is a signal peptide. Disordered regions lie at residues 41 to 275 (PCKD…HTVS), 415 to 466 (GSVS…SSSL), and 536 to 561 (PLGPQLMDPKVSLPQGEPQGEPLEKS). Over residues 61-99 (GSNSISSQGGSSSFSSQGGSSSFSSHGGSSSSQGSSSGS) the composition is skewed to low complexity. The segment covering 116-127 (GSGGSRPGGSGS) has biased composition (gly residues). Composition is skewed to low complexity over residues 128 to 207 (QSGS…SSGS) and 224 to 248 (TSGMSQSGGSSTSQSSSSNLRPCSS). The span at 415-430 (GSVSSKGPCSGTRIQI) shows a compositional bias: polar residues. Over residues 431–466 (TSSSSSTSYHPCSGGPSQGPCSSPGTGSISGGSSSL) the composition is skewed to low complexity.

It localises to the secreted. Its function is as follows. Important for the epidermal barrier integrity. The polypeptide is Corneodesmosin (Cdsn) (Mus musculus (Mouse)).